A 375-amino-acid chain; its full sequence is Queuine tRNA-ribosyltransferase (375 aa).

Asp93 acts as the Proton acceptor in catalysis. Substrate contacts are provided by residues 93 to 97, Asp147, Gln191, and Gly218; that span reads DSGGF. The tract at residues 249-255 is RNA binding; it reads GVGTPLD. The Nucleophile role is filled by Asp268. An RNA binding; important for wobble base 34 recognition region spans residues 273-277; the sequence is TRNAR. Zn(2+) is bound by residues Cys306, Cys308, Cys311, and His337.

Belongs to the queuine tRNA-ribosyltransferase family. As to quaternary structure, homodimer. Within each dimer, one monomer is responsible for RNA recognition and catalysis, while the other monomer binds to the replacement base PreQ1. Requires Zn(2+) as cofactor.

It catalyses the reaction 7-aminomethyl-7-carbaguanine + guanosine(34) in tRNA = 7-aminomethyl-7-carbaguanosine(34) in tRNA + guanine. It participates in tRNA modification; tRNA-queuosine biosynthesis. In terms of biological role, catalyzes the base-exchange of a guanine (G) residue with the queuine precursor 7-aminomethyl-7-deazaguanine (PreQ1) at position 34 (anticodon wobble position) in tRNAs with GU(N) anticodons (tRNA-Asp, -Asn, -His and -Tyr). Catalysis occurs through a double-displacement mechanism. The nucleophile active site attacks the C1' of nucleotide 34 to detach the guanine base from the RNA, forming a covalent enzyme-RNA intermediate. The proton acceptor active site deprotonates the incoming PreQ1, allowing a nucleophilic attack on the C1' of the ribose to form the product. After dissociation, two additional enzymatic reactions on the tRNA convert PreQ1 to queuine (Q), resulting in the hypermodified nucleoside queuosine (7-(((4,5-cis-dihydroxy-2-cyclopenten-1-yl)amino)methyl)-7-deazaguanosine). This Nitratidesulfovibrio vulgaris (strain DP4) (Desulfovibrio vulgaris) protein is Queuine tRNA-ribosyltransferase.